A 133-amino-acid polypeptide reads, in one-letter code: Secreted effector protein SteB (133 aa).

Its subcellular location is the secreted. It is found in the host cytoplasm. In terms of biological role, effector proteins function to alter host cell physiology and promote bacterial survival in host tissues. The polypeptide is Secreted effector protein SteB (steB) (Salmonella typhimurium (strain 14028s / SGSC 2262)).